The primary structure comprises 377 residues: Chaperone protein DnaJ (377 aa).

The J domain maps to 5 to 70 (DFYEVLGVDR…EKRSAYDRMG (66 aa)). A CR-type zinc finger spans residues 136–214 (GCKKEISFTA…CHGTGVKDKS (79 aa)). The Zn(2+) site is built by Cys-149, Cys-152, Cys-166, Cys-169, Cys-188, Cys-191, Cys-202, and Cys-205. CXXCXGXG motif repeat units lie at residues 149 to 156 (CETCDGKG), 166 to 173 (CSTCGGHG), 188 to 195 (CPNCGGSG), and 202 to 209 (CNDCHGTG). The disordered stretch occupies residues 353–377 (LDGDSKHHQSPKKKSFFEKLGDLFD). A compositionally biased stretch (basic and acidic residues) spans 367–377 (SFFEKLGDLFD).

The protein belongs to the DnaJ family. As to quaternary structure, homodimer. Zn(2+) serves as cofactor.

It is found in the cytoplasm. Its function is as follows. Participates actively in the response to hyperosmotic and heat shock by preventing the aggregation of stress-denatured proteins and by disaggregating proteins, also in an autonomous, DnaK-independent fashion. Unfolded proteins bind initially to DnaJ; upon interaction with the DnaJ-bound protein, DnaK hydrolyzes its bound ATP, resulting in the formation of a stable complex. GrpE releases ADP from DnaK; ATP binding to DnaK triggers the release of the substrate protein, thus completing the reaction cycle. Several rounds of ATP-dependent interactions between DnaJ, DnaK and GrpE are required for fully efficient folding. Also involved, together with DnaK and GrpE, in the DNA replication of plasmids through activation of initiation proteins. The polypeptide is Chaperone protein DnaJ (Psychrobacter sp. (strain PRwf-1)).